The sequence spans 98 residues: NADH-ubiquinone oxidoreductase chain 4L (98 aa).

3 helical membrane-spanning segments follow: residues 2–22, 26–46, and 59–79; these read SPAV…TLMF, LMST…LATI, and IPIA…ALLA.

Belongs to the complex I subunit 4L family. Core subunit of respiratory chain NADH dehydrogenase (Complex I) which is composed of 45 different subunits.

The protein localises to the mitochondrion inner membrane. It carries out the reaction a ubiquinone + NADH + 5 H(+)(in) = a ubiquinol + NAD(+) + 4 H(+)(out). Functionally, core subunit of the mitochondrial membrane respiratory chain NADH dehydrogenase (Complex I) which catalyzes electron transfer from NADH through the respiratory chain, using ubiquinone as an electron acceptor. Part of the enzyme membrane arm which is embedded in the lipid bilayer and involved in proton translocation. The chain is NADH-ubiquinone oxidoreductase chain 4L (MT-ND4L) from Alexandromys kikuchii (Taiwan vole).